A 312-amino-acid chain; its full sequence is MTKKKISIIGAGNTGATLAFIVAQHELADVVLIDRPDNEGQVKGKALDIFESSPVYGFDAKVTGSVNYADTADSDIVVITAGSPRKPGMSRDDLVQINEKVMFDVTKEIVKYSPDCKIIVLTNPVDAMTYSVLKASGFPKERVIGQSGVLDTARYQSFIAEALNVSIKDIRGLVLGGHGDTMVPLVNSTNVNGVPLHQLLNQTQIEQIVERTRKGGAEIVALLGNGSAYYAPASAVFEMIEAILKDQHRLLPSIALLEGEYGFSDICLGVPTVLSEKGIENIVELALSDNEQAQLRISADSVEEVKQALKNQ.

NAD(+) contacts are provided by residues 10–15 (GAGNTG) and aspartate 34. Substrate is bound by residues arginine 85 and arginine 91. NAD(+)-binding positions include asparagine 98 and 121–123 (LTN). 2 residues coordinate substrate: asparagine 123 and arginine 154. Histidine 178 (proton acceptor) is an active-site residue.

This sequence belongs to the LDH/MDH superfamily. MDH type 3 family.

The enzyme catalyses (S)-malate + NAD(+) = oxaloacetate + NADH + H(+). Its function is as follows. Catalyzes the reversible oxidation of malate to oxaloacetate. This is Malate dehydrogenase from Staphylococcus saprophyticus subsp. saprophyticus (strain ATCC 15305 / DSM 20229 / NCIMB 8711 / NCTC 7292 / S-41).